A 328-amino-acid chain; its full sequence is 3-dehydroquinate synthase (328 aa).

This sequence belongs to the archaeal-type DHQ synthase family.

The catalysed reaction is 2-amino-2,3,7-trideoxy-D-lyxo-hept-6-ulosonate + NAD(+) + H2O = 3-dehydroquinate + NH4(+) + NADH + H(+). Catalyzes the oxidative deamination and cyclization of 2-amino-3,7-dideoxy-D-threo-hept-6-ulosonic acid (ADH) to yield 3-dehydroquinate (DHQ), which is fed into the canonical shikimic pathway of aromatic amino acid biosynthesis. The chain is 3-dehydroquinate synthase from Methanoculleus marisnigri (strain ATCC 35101 / DSM 1498 / JR1).